The following is a 198-amino-acid chain: Molybdopterin synthase catalytic subunit (198 aa).

Residues 107–108 (HR), Lys-123, and 130–132 (KKE) each bind substrate.

Belongs to the MoaE family. MOCS2B subfamily. In terms of assembly, heterotetramer; composed of 2 small (MOCS2A) and 2 large (MOCS2B) subunits.

The protein resides in the cytoplasm. The catalysed reaction is 2 [molybdopterin-synthase sulfur-carrier protein]-C-terminal-Gly-aminoethanethioate + cyclic pyranopterin phosphate + H2O = molybdopterin + 2 [molybdopterin-synthase sulfur-carrier protein]-C-terminal Gly-Gly + 2 H(+). Its pathway is cofactor biosynthesis; molybdopterin biosynthesis. In terms of biological role, catalytic subunit of the molybdopterin synthase complex, a complex that catalyzes the conversion of precursor Z into molybdopterin. Acts by mediating the incorporation of 2 sulfur atoms from thiocarboxylated MOCS2A into precursor Z to generate a dithiolene group. This Arabidopsis thaliana (Mouse-ear cress) protein is Molybdopterin synthase catalytic subunit.